Here is a 355-residue protein sequence, read N- to C-terminus: tRNA (guanine-N(1)-)-methyltransferase (355 aa).

S-adenosyl-L-methionine contacts are provided by residues Gly109 and 129–134 (IGDYVL).

Belongs to the RNA methyltransferase TrmD family. As to quaternary structure, homodimer.

The protein localises to the cytoplasm. It catalyses the reaction guanosine(37) in tRNA + S-adenosyl-L-methionine = N(1)-methylguanosine(37) in tRNA + S-adenosyl-L-homocysteine + H(+). Specifically methylates guanosine-37 in various tRNAs. This is tRNA (guanine-N(1)-)-methyltransferase from Chlamydia abortus (strain DSM 27085 / S26/3) (Chlamydophila abortus).